Reading from the N-terminus, the 290-residue chain is Uridine diphosphate glucose pyrophosphatase NUDT22 (290 aa).

Residues Phe-56, Tyr-87, Arg-139, Ala-144, Asp-151, His-156, and Glu-158 each contribute to the substrate site. The Nudix hydrolase domain maps to 118–285; it reads ADPLGVGAAL…KGAIFLYNRV (168 aa). Residues 175–196 carry the Nudix box motif; it reads GELVVHELFSSVLQEICDEVNV. Residues Glu-189 and Glu-193 each contribute to the Mg(2+) site. Ser-274 contributes to the substrate binding site.

The protein belongs to the Nudix family. The cofactor is Mg(2+).

It carries out the reaction UDP-sugar + H2O = UMP + alpha-D-aldose 1-phosphate.. In terms of biological role, hydrolyzes UDP-glucose to glucose 1-phosphate and UMP and UDP-galactose to galactose 1-phosphate and UMP. Preferred substrate is UDP-glucose. This is Uridine diphosphate glucose pyrophosphatase NUDT22 (NUDT22) from Bos taurus (Bovine).